Here is a 264-residue protein sequence, read N- to C-terminus: 3-methyl-2-oxobutanoate hydroxymethyltransferase (264 aa).

The Mg(2+) site is built by aspartate 45 and aspartate 84. 3-methyl-2-oxobutanoate contacts are provided by residues 45 to 46 (DS), aspartate 84, and lysine 112. Mg(2+) is bound at residue glutamate 114. Catalysis depends on glutamate 181, which acts as the Proton acceptor.

This sequence belongs to the PanB family. Homodecamer; pentamer of dimers. Mg(2+) is required as a cofactor.

It is found in the cytoplasm. It catalyses the reaction 3-methyl-2-oxobutanoate + (6R)-5,10-methylene-5,6,7,8-tetrahydrofolate + H2O = 2-dehydropantoate + (6S)-5,6,7,8-tetrahydrofolate. It functions in the pathway cofactor biosynthesis; (R)-pantothenate biosynthesis; (R)-pantoate from 3-methyl-2-oxobutanoate: step 1/2. Functionally, catalyzes the reversible reaction in which hydroxymethyl group from 5,10-methylenetetrahydrofolate is transferred onto alpha-ketoisovalerate to form ketopantoate. This Escherichia coli (strain 55989 / EAEC) protein is 3-methyl-2-oxobutanoate hydroxymethyltransferase.